A 576-amino-acid polypeptide reads, in one-letter code: Insulin-like growth factor 2 mRNA-binding protein 1 (576 aa).

RRM domains lie at 2–75 and 81–156; these read NKLY…HSVP and RKIQ…YIPD. The segment at 158–189 is disordered; sequence QSVQGPENGRRGGFGARGAPRQGSPVTAGAPV. 2 consecutive KH domains span residues 195–260 and 276–343; these read DIPL…CKMI and EVPL…EQEI. Tyrosine 396 is subject to Phosphotyrosine; by SRC. KH domains lie at 404 to 469 and 486 to 552; these read QETV…QGRI and KLET…QRKI.

It belongs to the RRM IMP/VICKZ family. Can form homooligomers and heterooligomers with IGF2BP1 and IGF2BP3 in an RNA-dependent manner. Associates with the cytoskeleton, predominantly with actin filament bundles and occasionally with microtubules. In a heterologous system, interacts with ELAVL1, DHX9 and HNRNPU. In terms of processing, phosphorylated by SRC at Tyr-396. This residue is involved in ACTB mRNA binding, its phosphorylation impairs association with ACTB mRNA and hence abolishes translational repression. Phosphorylation occurs in close proximity to filopodia and in the growth cones of differentiated neuroglioblastoma cells. Expressed in neurons and embryonic fibroblasts (at protein level).

The protein localises to the nucleus. Its subcellular location is the cytoplasm. It is found in the perinuclear region. It localises to the P-body. The protein resides in the stress granule. The protein localises to the cell projection. Its subcellular location is the growth cone. It is found in the filopodium. It localises to the lamellipodium. Its function is as follows. RNA-binding factor that recruits target transcripts to cytoplasmic protein-RNA complexes (mRNPs). This transcript 'caging' into mRNPs allows mRNA transport and transient storage. It also modulates the rate and location at which target transcripts encounter the translational apparatus and shields them from endonuclease attacks or microRNA-mediated degradation. Preferentially binds to N6-methyladenosine (m6A)-containing mRNAs and increases their stability. Plays a direct role in the transport and translation of transcripts required for axonal regeneration in adult sensory neurons. Regulates localized beta-actin/ACTB mRNA translation in polarized cells, a crucial process for cell migration and neurite outgrowth. Co-transcriptionally associates with the ACTB mRNA in the nucleus. This binding involves by a conserved 54-nucleotide element in the ACTB mRNA 3'-UTR, known as the 'zipcode'. The ribonucleoparticle (RNP) thus formed is exported to the cytoplasm, binds to a motor protein and is transported along the cytoskeleton to the cell periphery. During transport, IGF2BP1 prevents beta-actin mRNA from being translated into protein. When the RNP complex reaches its destination near the plasma membrane, IGF2BP1 is phosphorylated by SRC. This releases the mRNA, allowing ribosomal 40S and 60S subunits to assemble and initiate ACTB protein synthesis. The monomeric ACTB protein then assembles into the subcortical actin cytoskeleton, which pushes the leading edge onwards. Binds MYC mRNA. Binding to MYC mRNA is enhanced by m6A-modification of the CRD. Promotes the directed movement of cells by fine-tuning intracellular signaling networks. Binds to MAPK4 3'-UTR and inhibits its translation. Interacts with PTEN transcript open reading frame (ORF) and prevents mRNA decay. This combined action on MAPK4 (down-regulation) and PTEN (up-regulation) antagonizes HSPB1 phosphorylation, consequently it prevents G-actin sequestration by phosphorylated HSPB1, allowing F-actin polymerization. Hence enhances the velocity of cell migration and stimulates directed cell migration by PTEN-modulated polarization. The sequence is that of Insulin-like growth factor 2 mRNA-binding protein 1 (IGF2BP1) from Gallus gallus (Chicken).